The primary structure comprises 313 residues: Malate dehydrogenase (313 aa).

NAD(+) contacts are provided by residues 8–13 (GAGNVG) and Asp-33. Residues Arg-83 and Arg-89 each contribute to the substrate site. Residues Asn-96 and 119–121 (ISN) each bind NAD(+). Residues Asn-121 and Arg-152 each coordinate substrate. His-176 serves as the catalytic Proton acceptor.

Belongs to the LDH/MDH superfamily. MDH type 3 family.

The catalysed reaction is (S)-malate + NAD(+) = oxaloacetate + NADH + H(+). In terms of biological role, catalyzes the reversible oxidation of malate to oxaloacetate. The sequence is that of Malate dehydrogenase from Parabacteroides distasonis (strain ATCC 8503 / DSM 20701 / CIP 104284 / JCM 5825 / NCTC 11152).